A 147-amino-acid polypeptide reads, in one-letter code: Large ribosomal subunit protein uL15 (147 aa).

Positions 1-62 (MDLNTLKPAL…GQMPLQRRLP (62 aa)) are disordered. The span at 30 to 39 (TATKGHKGQK) shows a compositional bias: basic residues.

The protein belongs to the universal ribosomal protein uL15 family. Part of the 50S ribosomal subunit.

Binds to the 23S rRNA. In Pelobacter propionicus (strain DSM 2379 / NBRC 103807 / OttBd1), this protein is Large ribosomal subunit protein uL15.